The primary structure comprises 140 residues: RxLR effector protein CRE9 (140 aa).

The first 24 residues, 1–24, serve as a signal peptide directing secretion; it reads MRTSVFVALVVATFVATCISFTSA. Positions 43-61 match the RxLR-dEER motif; it reads RTLAEADDWWLASTNTEER. Residues 119 to 139 traverse the membrane as a helical segment; the sequence is LKILYGALLAGLIIVGVEAML.

Belongs to the RxLR effector family.

It is found in the secreted. It localises to the host cell. Its subcellular location is the membrane. Effector that is involved in host plant infection. Contributes to virulence during the early infection stage, by inhibiting plant defense responses induced by both PAMP-triggered immunity (PTI) and effector-triggered immunity (ETI). This is RxLR effector protein CRE9 from Phytophthora infestans (strain T30-4) (Potato late blight agent).